The following is a 139-amino-acid chain: UPF0310 protein RSal33209_2865 (139 aa).

This sequence belongs to the UPF0310 family.

In Renibacterium salmoninarum (strain ATCC 33209 / DSM 20767 / JCM 11484 / NBRC 15589 / NCIMB 2235), this protein is UPF0310 protein RSal33209_2865.